The sequence spans 537 residues: Exodeoxyribonuclease 7 large subunit (537 aa).

Positions 508–537 are disordered; sequence GEGAPVEPPQAARPSKGARTKAAQPSLFDD.

This sequence belongs to the XseA family. As to quaternary structure, heterooligomer composed of large and small subunits.

The protein localises to the cytoplasm. The enzyme catalyses Exonucleolytic cleavage in either 5'- to 3'- or 3'- to 5'-direction to yield nucleoside 5'-phosphates.. Bidirectionally degrades single-stranded DNA into large acid-insoluble oligonucleotides, which are then degraded further into small acid-soluble oligonucleotides. In Azorhizobium caulinodans (strain ATCC 43989 / DSM 5975 / JCM 20966 / LMG 6465 / NBRC 14845 / NCIMB 13405 / ORS 571), this protein is Exodeoxyribonuclease 7 large subunit.